A 325-amino-acid chain; its full sequence is Putative [LysW]-lysine/[LysW]-ornithine hydrolase (325 aa).

A Zn(2+)-binding site is contributed by His66. The active site involves Asp68. Asp90 contributes to the Zn(2+) binding site. The active-site Proton acceptor is Glu117. Residues Glu118, Glu139, and His297 each coordinate Zn(2+).

It belongs to the peptidase M20A family. LysK subfamily. Zn(2+) serves as cofactor. Co(2+) is required as a cofactor.

The protein resides in the cytoplasm. It carries out the reaction [amino-group carrier protein]-C-terminal-gamma-(L-lysyl)-L-glutamate + H2O = [amino-group carrier protein]-C-terminal-L-glutamate + L-lysine. The enzyme catalyses [amino-group carrier protein]-C-terminal-gamma-(L-ornithyl)-L-glutamate + H2O = [amino-group carrier protein]-C-terminal-L-glutamate + L-ornithine. The protein operates within amino-acid biosynthesis; L-lysine biosynthesis via AAA pathway; L-lysine from L-alpha-aminoadipate (Thermus route): step 5/5. Its pathway is amino-acid biosynthesis; L-arginine biosynthesis. In terms of biological role, catalyzes the release of L-lysine from [LysW]-gamma-L-lysine and the release of L-ornithine from [LysW]-L-ornithine. In Pyrococcus horikoshii (strain ATCC 700860 / DSM 12428 / JCM 9974 / NBRC 100139 / OT-3), this protein is Putative [LysW]-lysine/[LysW]-ornithine hydrolase.